The sequence spans 539 residues: Tyrosine-protein kinase csk-1 (539 aa).

Positions 43–110 (SPGNDVIVTR…HADCVVRING (68 aa)) constitute an SH3 domain. A disordered region spans residues 129–148 (PGAASTTSSTSSHHSTAANH). Low complexity predominate over residues 131 to 146 (AASTTSSTSSHHSTAA). An SH2 domain is found at 151–241 (WFHSMISREN…GLCHRLVTPI (91 aa)). Residues 283–535 (IDVGDTIGHG…GQVLQRLTTI (253 aa)) form the Protein kinase domain. ATP is bound by residues 289–297 (IGHGEFGDV) and K310. D403 acts as the Proton acceptor in catalysis.

The protein belongs to the protein kinase superfamily. Tyr protein kinase family. CSK subfamily. It depends on Mg(2+) as a cofactor. Mn(2+) is required as a cofactor. Expressed predominantly in pharyngeal muscles in procorpus, metacorpus and terminal bulb. Expressed also in some neurons (ASE, ADF, AVA, AUA, RMDV and BAG) in the head region, anchor cell, vulva, cells around anus, body wall muscle and gondal distal tip cells.

The enzyme catalyses L-tyrosyl-[protein] + ATP = O-phospho-L-tyrosyl-[protein] + ADP + H(+). Functionally, non-receptor tyrosine-protein kinase which plays a role in pharynx function by regulating pumping and the orientation of pharyngeal muscle fibers, independently of src-1 and src-2. May phosphorylate and thereby negatively regulate src-1 and src-2 activities. The polypeptide is Tyrosine-protein kinase csk-1 (Caenorhabditis elegans).